Consider the following 207-residue polypeptide: UPF0319 protein VV2327 (207 aa).

The first 18 residues, 1-18, serve as a signal peptide directing secretion; that stretch reads MLRVLGLAGMLMSFNIHA.

The protein belongs to the UPF0319 family.

The protein is UPF0319 protein VV2327 of Vibrio vulnificus (strain YJ016).